Reading from the N-terminus, the 314-residue chain is ATP synthase gamma chain (314 aa).

It belongs to the ATPase gamma chain family. F-type ATPases have 2 components, CF(1) - the catalytic core - and CF(0) - the membrane proton channel. CF(1) has five subunits: alpha(3), beta(3), gamma(1), delta(1), epsilon(1). CF(0) has three main subunits: a, b and c.

It is found in the cellular thylakoid membrane. Produces ATP from ADP in the presence of a proton gradient across the membrane. The gamma chain is believed to be important in regulating ATPase activity and the flow of protons through the CF(0) complex. The sequence is that of ATP synthase gamma chain from Rippkaea orientalis (strain PCC 8801 / RF-1) (Cyanothece sp. (strain PCC 8801)).